We begin with the raw amino-acid sequence, 223 residues long: Adenylate kinase 4, mitochondrial (223 aa).

15 to 20 contributes to the a ribonucleoside 5'-triphosphate binding site; that stretch reads GSGKGT. Positions 35-64 are NMP; that stretch reads SSGHFLRENIKASTEVGEMAKQYIEKSLLV. Ser36 and Arg41 together coordinate AMP. Residue Lys60 is modified to N6-succinyllysine. Residues 62 to 64, 89 to 92, and Gln96 each bind AMP; these read LLV and GFPR. Residues 125–162 form an LID region; the sequence is RRWIHPPSGRVYNLDFNPPHVHGIDDVTGEPLVQQEDD. Residues Arg126 and 135 to 136 contribute to the a ribonucleoside 5'-triphosphate site; that span reads VY. Arg170 lines the AMP pocket. An N6-acetyllysine modification is found at Lys175. Residues Lys179 and Lys186 each carry the N6-acetyllysine; alternate modification. N6-succinyllysine; alternate occurs at positions 179 and 186. A ribonucleoside 5'-triphosphate is bound at residue Thr199.

Belongs to the adenylate kinase family. AK3 subfamily. In terms of assembly, monomer. Interacts with SLC25A5/ANT2. Highly expressed in kidney, moderately expressed in heart and liver and weakly expressed in brain.

It is found in the mitochondrion matrix. It catalyses the reaction a ribonucleoside 5'-phosphate + ATP = a ribonucleoside 5'-diphosphate + ADP. It carries out the reaction AMP + ATP = 2 ADP. The enzyme catalyses GTP + AMP = GDP + ADP. The catalysed reaction is CMP + ATP = CDP + ADP. It catalyses the reaction GTP + CMP = CDP + GDP. It carries out the reaction dAMP + ATP = dADP + ADP. The enzyme catalyses dCMP + ATP = dCDP + ADP. The catalysed reaction is a 2'-deoxyribonucleoside 5'-diphosphate + ATP = a 2'-deoxyribonucleoside 5'-triphosphate + ADP. It catalyses the reaction a ribonucleoside 5'-diphosphate + ATP = a ribonucleoside 5'-triphosphate + ADP. It carries out the reaction GDP + ATP = GTP + ADP. The enzyme catalyses CDP + GTP = CTP + GDP. The catalysed reaction is CDP + ATP = CTP + ADP. It catalyses the reaction UDP + ATP = UTP + ADP. It carries out the reaction GTP + UDP = UTP + GDP. The enzyme catalyses dADP + GTP = dATP + GDP. The catalysed reaction is dCDP + GTP = dCTP + GDP. It catalyses the reaction dCDP + ATP = dCTP + ADP. It carries out the reaction dGDP + ATP = dGTP + ADP. The enzyme catalyses dTDP + GTP = dTTP + GDP. The catalysed reaction is dTDP + ATP = dTTP + ADP. Broad-specificity mitochondrial nucleoside phosphate kinase involved in cellular nucleotide homeostasis by catalyzing nucleoside-phosphate interconversions. Similar to other adenylate kinases, preferentially catalyzes the phosphorylation of the nucleoside monophosphate AMP with ATP as phosphate donor to produce ADP. Phosphorylates only AMP when using GTP as phosphate donor. In vitro, can also catalyze the phosphorylation of CMP, dAMP and dCMP and use GTP as an alternate phosphate donor. Moreover, exhibits a diphosphate kinase activity, producing ATP, CTP, GTP, UTP, TTP, dATP, dCTP and dGTP from the corresponding diphosphate substrates with either ATP or GTP as phosphate donors. Plays a role in controlling cellular ATP levels by regulating phosphorylation and activation of the energy sensor protein kinase AMPK. Plays a protective role in the cellular response to oxidative stress. The chain is Adenylate kinase 4, mitochondrial from Homo sapiens (Human).